We begin with the raw amino-acid sequence, 258 residues long: Phosphoribosylaminoimidazole-succinocarboxamide synthase (258 aa).

This sequence belongs to the SAICAR synthetase family.

The enzyme catalyses 5-amino-1-(5-phospho-D-ribosyl)imidazole-4-carboxylate + L-aspartate + ATP = (2S)-2-[5-amino-1-(5-phospho-beta-D-ribosyl)imidazole-4-carboxamido]succinate + ADP + phosphate + 2 H(+). The protein operates within purine metabolism; IMP biosynthesis via de novo pathway; 5-amino-1-(5-phospho-D-ribosyl)imidazole-4-carboxamide from 5-amino-1-(5-phospho-D-ribosyl)imidazole-4-carboxylate: step 1/2. The protein is Phosphoribosylaminoimidazole-succinocarboxamide synthase of Sphingopyxis alaskensis (strain DSM 13593 / LMG 18877 / RB2256) (Sphingomonas alaskensis).